A 1349-amino-acid polypeptide reads, in one-letter code: Protein turtle homolog B (1349 aa).

Residues 1–20 form the signal peptide; the sequence is MIWYVATFIASVIGTRGLAA. At 21–722 the chain is on the extracellular side; it reads EGAHGLREEP…DLTEDGLARP (702 aa). 5 Ig-like domains span residues 24–129, 139–226, 228–320, 324–415, and 420–504; these read HGLR…HNGS, PTFT…LLVQ, PPFI…AYLT, PARV…ARLV, and PYFT…THLT. Cystine bridges form between cysteine 45/cysteine 113 and cysteine 161/cysteine 208. Residues asparagine 241 and asparagine 258 are each glycosylated (N-linked (GlcNAc...) asparagine). 3 disulfide bridges follow: cysteine 250-cysteine 303, cysteine 346-cysteine 397, and cysteine 442-cysteine 488. Fibronectin type-III domains follow at residues 512–604 and 614–708; these read APGS…TLAF and LVTP…STDI. The N-linked (GlcNAc...) asparagine glycan is linked to asparagine 624. Residues 723 to 743 form a helical membrane-spanning segment; it reads VLAGIVATICFLAAAILFSTL. At 744-1349 the chain is on the cytoplasmic side; sequence AACFVNKQRK…SPPERALSKL (606 aa). Disordered regions lie at residues 758–817, 911–1081, and 1099–1349; these read RKKD…EKEL, QLTP…RGLP, and APKG…LSKL. Phosphoserine is present on residues serine 775, serine 783, and serine 794. The segment covering 911–921 has biased composition (polar residues); the sequence is QLTPLSSSQES. A compositionally biased stretch (low complexity) spans 985–998; it reads VPEVGSPLSSVMSS. Composition is skewed to polar residues over residues 1018–1033, 1129–1141, and 1199–1214; these read ENAS…TPTG, LVSQ…TSQG, and SRLS…SRTG. Position 1136 is an omega-N-methylarginine (arginine 1136). Phosphoserine is present on residues serine 1207 and serine 1215. Low complexity predominate over residues 1251-1271; the sequence is STPSTGSPSQSSRSGSPSYRP. Residues 1283–1292 are compositionally biased toward pro residues; sequence PSPPPGPAPA.

The protein belongs to the immunoglobulin superfamily. Turtle family. Found in a complex with MAGI2 and NLGN2, where it interacts with MAGI2 (via PDZ 5 and PDZ 6 domains). N-glycosylated and sialylated. Not significantly O-glycosylated.

It localises to the postsynaptic cell membrane. Its subcellular location is the postsynaptic density. Functionally, transmembrane protein which is abundantly expressed in interneurons, where it may regulate inhibitory synapse development. May mediate homophilic cell adhesion. In Homo sapiens (Human), this protein is Protein turtle homolog B (IGSF9B).